The chain runs to 463 residues: Bifunctional protein HldE (463 aa).

The interval 1-313 (MTGPMAVRTD…RALAALPDTD (313 aa)) is ribokinase. Asp-258 is an active-site residue. Positions 331-463 (AAGGCFDLLH…LLARAAEGAR (133 aa)) are cytidylyltransferase.

It in the N-terminal section; belongs to the carbohydrate kinase PfkB family. This sequence in the C-terminal section; belongs to the cytidylyltransferase family. In terms of assembly, homodimer.

It carries out the reaction D-glycero-beta-D-manno-heptose 7-phosphate + ATP = D-glycero-beta-D-manno-heptose 1,7-bisphosphate + ADP + H(+). It catalyses the reaction D-glycero-beta-D-manno-heptose 1-phosphate + ATP + H(+) = ADP-D-glycero-beta-D-manno-heptose + diphosphate. The protein operates within nucleotide-sugar biosynthesis; ADP-L-glycero-beta-D-manno-heptose biosynthesis; ADP-L-glycero-beta-D-manno-heptose from D-glycero-beta-D-manno-heptose 7-phosphate: step 1/4. Its pathway is nucleotide-sugar biosynthesis; ADP-L-glycero-beta-D-manno-heptose biosynthesis; ADP-L-glycero-beta-D-manno-heptose from D-glycero-beta-D-manno-heptose 7-phosphate: step 3/4. Its function is as follows. Catalyzes the phosphorylation of D-glycero-D-manno-heptose 7-phosphate at the C-1 position to selectively form D-glycero-beta-D-manno-heptose-1,7-bisphosphate. In terms of biological role, catalyzes the ADP transfer from ATP to D-glycero-beta-D-manno-heptose 1-phosphate, yielding ADP-D-glycero-beta-D-manno-heptose. The chain is Bifunctional protein HldE from Streptomyces coelicolor (strain ATCC BAA-471 / A3(2) / M145).